The primary structure comprises 493 residues: Glutamyl-tRNA(Gln) amidotransferase subunit A (493 aa).

Active-site charge relay system residues include Lys-79 and Ser-159. The active-site Acyl-ester intermediate is Ser-183.

Belongs to the amidase family. GatA subfamily. Heterotrimer of A, B and C subunits.

It carries out the reaction L-glutamyl-tRNA(Gln) + L-glutamine + ATP + H2O = L-glutaminyl-tRNA(Gln) + L-glutamate + ADP + phosphate + H(+). Functionally, allows the formation of correctly charged Gln-tRNA(Gln) through the transamidation of misacylated Glu-tRNA(Gln) in organisms which lack glutaminyl-tRNA synthetase. The reaction takes place in the presence of glutamine and ATP through an activated gamma-phospho-Glu-tRNA(Gln). The sequence is that of Glutamyl-tRNA(Gln) amidotransferase subunit A from Brucella melitensis biotype 2 (strain ATCC 23457).